Reading from the N-terminus, the 227-residue chain is Cytochrome c oxidase subunit 2 (227 aa).

The Mitochondrial intermembrane segment spans residues 1-14 (MAYPFQLGFQDATS). The chain crosses the membrane as a helical span at residues 15–45 (PIMEELLHFHDHTLMIVFLISSLVLYVISAM). Residues 46-59 (LTTNLTHTSTMDAQ) are Mitochondrial matrix-facing. The helical transmembrane segment at 60–87 (EVETIWTILPAIILITIALPSLRILYMM) threads the bilayer. Topologically, residues 88–227 (DEINNPAMTI…YFEKWSVSML (140 aa)) are mitochondrial intermembrane. The Cu cation site is built by His161, Cys196, Glu198, Cys200, His204, and Met207. Glu198 provides a ligand contact to Mg(2+). Phosphotyrosine is present on Tyr218.

Belongs to the cytochrome c oxidase subunit 2 family. As to quaternary structure, component of the cytochrome c oxidase (complex IV, CIV), a multisubunit enzyme composed of 14 subunits. The complex is composed of a catalytic core of 3 subunits MT-CO1, MT-CO2 and MT-CO3, encoded in the mitochondrial DNA, and 11 supernumerary subunits COX4I, COX5A, COX5B, COX6A, COX6B, COX6C, COX7A, COX7B, COX7C, COX8 and NDUFA4, which are encoded in the nuclear genome. The complex exists as a monomer or a dimer and forms supercomplexes (SCs) in the inner mitochondrial membrane with NADH-ubiquinone oxidoreductase (complex I, CI) and ubiquinol-cytochrome c oxidoreductase (cytochrome b-c1 complex, complex III, CIII), resulting in different assemblies (supercomplex SCI(1)III(2)IV(1) and megacomplex MCI(2)III(2)IV(2)). Found in a complex with TMEM177, COA6, COX18, COX20, SCO1 and SCO2. Interacts with TMEM177 in a COX20-dependent manner. Interacts with COX20. Interacts with COX16. It depends on Cu cation as a cofactor.

Its subcellular location is the mitochondrion inner membrane. It carries out the reaction 4 Fe(II)-[cytochrome c] + O2 + 8 H(+)(in) = 4 Fe(III)-[cytochrome c] + 2 H2O + 4 H(+)(out). Its function is as follows. Component of the cytochrome c oxidase, the last enzyme in the mitochondrial electron transport chain which drives oxidative phosphorylation. The respiratory chain contains 3 multisubunit complexes succinate dehydrogenase (complex II, CII), ubiquinol-cytochrome c oxidoreductase (cytochrome b-c1 complex, complex III, CIII) and cytochrome c oxidase (complex IV, CIV), that cooperate to transfer electrons derived from NADH and succinate to molecular oxygen, creating an electrochemical gradient over the inner membrane that drives transmembrane transport and the ATP synthase. Cytochrome c oxidase is the component of the respiratory chain that catalyzes the reduction of oxygen to water. Electrons originating from reduced cytochrome c in the intermembrane space (IMS) are transferred via the dinuclear copper A center (CU(A)) of subunit 2 and heme A of subunit 1 to the active site in subunit 1, a binuclear center (BNC) formed by heme A3 and copper B (CU(B)). The BNC reduces molecular oxygen to 2 water molecules using 4 electrons from cytochrome c in the IMS and 4 protons from the mitochondrial matrix. In Macrotus californicus (Californian leaf-nosed bat), this protein is Cytochrome c oxidase subunit 2 (MT-CO2).